Reading from the N-terminus, the 315-residue chain is Glutamyl-Q tRNA(Asp) synthetase (315 aa).

Residues 21 to 25 (RFAPS) and Glu-63 contribute to the L-glutamate site. Residues 24–34 (PSPSGLLHFGS) carry the 'HIGH' region motif. The Zn(2+) site is built by Cys-119, Cys-121, Tyr-133, and Cys-137. L-glutamate contacts are provided by Tyr-190 and Arg-208. The 'KMSKS' region motif lies at 251–255 (KLSKQ). Residue Lys-254 participates in ATP binding.

The protein belongs to the class-I aminoacyl-tRNA synthetase family. GluQ subfamily. Zn(2+) serves as cofactor.

In terms of biological role, catalyzes the tRNA-independent activation of glutamate in presence of ATP and the subsequent transfer of glutamate onto a tRNA(Asp). Glutamate is transferred on the 2-amino-5-(4,5-dihydroxy-2-cyclopenten-1-yl) moiety of the queuosine in the wobble position of the QUC anticodon. This is Glutamyl-Q tRNA(Asp) synthetase from Colwellia psychrerythraea (strain 34H / ATCC BAA-681) (Vibrio psychroerythus).